Here is a 96-residue protein sequence, read N- to C-terminus: MRVTSATCALLLALICSVQLGDACLDIDKLLANVVFDVSQDLLKEELARYNPSPLTEESFLNVQQCFANVSVTERFAHSVVIKKILQSNDCIEAAF.

Residues Met-1–Ala-23 form the signal peptide.

This sequence belongs to the secretoglobin family.

The protein resides in the secreted. This is Secretoglobin family 2B member 2 (SCGB2B2) from Homo sapiens (Human).